Consider the following 338-residue polypeptide: Homocysteine S-methyltransferase 3 (338 aa).

Positions A12 to L326 constitute a Hcy-binding domain. Zn(2+)-binding residues include C244, C311, and C312.

In terms of assembly, monomer. The cofactor is Zn(2+).

It carries out the reaction S-methyl-L-methionine + L-homocysteine = 2 L-methionine + H(+). Its function is as follows. Catalyzes methyl transfer from S-methylmethionine (SMM) to adenosyl-L-homocysteine (AdoMet). SMM degradation (by HMT-1, HMT-2, HMT-3 and HMT-4) and biosynthesis (by MMT1) constitute the SMM cycle in plants, which is probably required to achieve short term control of AdoMet level. In Zea mays (Maize), this protein is Homocysteine S-methyltransferase 3 (HMT-3).